The chain runs to 338 residues: Phosphonates-binding periplasmic protein (338 aa).

A signal peptide spans 1–26 (MNAKIIASLAFTSMFSLSTLLSPAHA).

It belongs to the phosphate/phosphite/phosphonate binding protein family. As to quaternary structure, the complex is composed of two ATP-binding proteins (PhnC), two transmembrane proteins (PhnE) and a solute-binding protein (PhnD).

Its subcellular location is the periplasm. Phosphonate binding protein that is part of the phosphonate uptake system. Exhibits high affinity for 2-aminoethylphosphonate, and somewhat less affinity to ethylphosphonate, methylphosphonate, phosphonoacetate and phenylphosphonate. The polypeptide is Phosphonates-binding periplasmic protein (phnD) (Escherichia coli (strain K12)).